The chain runs to 213 residues: Thymidylate kinase (213 aa).

10–17 (GIDGCGKT) contacts ATP.

Belongs to the thymidylate kinase family.

It catalyses the reaction dTMP + ATP = dTDP + ADP. Its function is as follows. Phosphorylation of dTMP to form dTDP in both de novo and salvage pathways of dTTP synthesis. This Synechococcus sp. (strain WH7803) protein is Thymidylate kinase.